A 129-amino-acid polypeptide reads, in one-letter code: Protein BEX2 (129 aa).

The segment at 1 to 37 is disordered; that stretch reads MESKVEQGVKNLNMENDHQEKEEKEEKPQDASKRDPI. Over residues 15–36 the composition is skewed to basic and acidic residues; it reads ENDHQEKEEKEEKPQDASKRDP. Position 51 is an omega-N-methylarginine (Arg51). The segment at 118 to 122 is his cluster; the sequence is HHDHH. Residue Cys126 participates in Zn(2+) binding.

It belongs to the BEX family. Interacts with LMO2, possibly leading to regulate the transcriptional activity of a DNA-binding complex containing LMO2. Interacts with OMP. As to expression, primarily localized to neuronal cells within several regions of the brain, including the olfactory epithelium, bulb, peri/paraventricular nuclei, suprachiasmatic nucleus, arcuate nucleus, median eminence, lateral hypothalamic area, thalamus, hippocampus and cerebellum (at protein level).

The protein localises to the cytoplasm. It is found in the nucleus. In terms of biological role, regulator of mitochondrial apoptosis and G1 cell cycle. Regulates the level of PP2A regulatory subunit B and PP2A phosphatase activity. In absence of reductive stress, acts as a pseudosubstrate for the CRL2(FEM1B) complex: associates with FEM1B via zinc, thereby preventing association between FEM1B and its substrates. In Mus musculus (Mouse), this protein is Protein BEX2.